A 450-amino-acid polypeptide reads, in one-letter code: Membrane-bound lytic murein transglycosylase F 2 (450 aa).

A signal peptide spans 1–20 (MRTWIAILAVVLVLLLNACT). The tract at residues 21 to 261 (DGPEDGPRLE…AMENRYYTYV (241 aa)) is non-LT domain. An LT domain region spans residues 262 to 450 (GEFDFVDLRA…YRDVIRQAFE (189 aa)). Glu-308 is an active-site residue.

This sequence in the N-terminal section; belongs to the bacterial solute-binding protein 3 family. In the C-terminal section; belongs to the transglycosylase Slt family.

It is found in the cell outer membrane. The catalysed reaction is Exolytic cleavage of the (1-&gt;4)-beta-glycosidic linkage between N-acetylmuramic acid (MurNAc) and N-acetylglucosamine (GlcNAc) residues in peptidoglycan, from either the reducing or the non-reducing ends of the peptidoglycan chains, with concomitant formation of a 1,6-anhydrobond in the MurNAc residue.. Murein-degrading enzyme that degrades murein glycan strands and insoluble, high-molecular weight murein sacculi, with the concomitant formation of a 1,6-anhydromuramoyl product. Lytic transglycosylases (LTs) play an integral role in the metabolism of the peptidoglycan (PG) sacculus. Their lytic action creates space within the PG sacculus to allow for its expansion as well as for the insertion of various structures such as secretion systems and flagella. The protein is Membrane-bound lytic murein transglycosylase F 2 of Alkalilimnicola ehrlichii (strain ATCC BAA-1101 / DSM 17681 / MLHE-1).